The sequence spans 466 residues: Histidine--tRNA ligase (466 aa).

It belongs to the class-II aminoacyl-tRNA synthetase family. Homodimer.

It is found in the cytoplasm. It catalyses the reaction tRNA(His) + L-histidine + ATP = L-histidyl-tRNA(His) + AMP + diphosphate + H(+). The chain is Histidine--tRNA ligase from Bifidobacterium longum subsp. infantis (strain ATCC 15697 / DSM 20088 / JCM 1222 / NCTC 11817 / S12).